The following is a 361-amino-acid chain: Peptide chain release factor 1 (361 aa).

The residue at position 235 (Q235) is an N5-methylglutamine.

Belongs to the prokaryotic/mitochondrial release factor family. Methylated by PrmC. Methylation increases the termination efficiency of RF1.

The protein localises to the cytoplasm. Its function is as follows. Peptide chain release factor 1 directs the termination of translation in response to the peptide chain termination codons UAG and UAA. The polypeptide is Peptide chain release factor 1 (Chlamydia felis (strain Fe/C-56) (Chlamydophila felis)).